The chain runs to 562 residues: Long-chain-fatty-acid--CoA ligase (562 aa).

The protein belongs to the ATP-dependent AMP-binding enzyme family. Requires Mg(2+) as cofactor.

The protein resides in the membrane. The catalysed reaction is a long-chain fatty acid + ATP + CoA = a long-chain fatty acyl-CoA + AMP + diphosphate. The protein operates within lipid metabolism; fatty acid beta-oxidation. Functionally, catalyzes the esterification, concomitant with transport, of exogenous long-chain fatty acids into metabolically active CoA thioesters for subsequent degradation or incorporation into phospholipids. This chain is Long-chain-fatty-acid--CoA ligase (fadD), found in Haemophilus influenzae (strain ATCC 51907 / DSM 11121 / KW20 / Rd).